Here is a 780-residue protein sequence, read N- to C-terminus: Replication origin-binding protein (780 aa).

The Helicase ATP-binding domain occupies 39-195 (SFENVRQPIK…AAFKPDTQIA (157 aa)). Residue 52 to 59 (AAMGSGKT) coordinates ATP.

The protein belongs to the herpesviridae OriBP family.

Its function is as follows. Probably involved in DNA replication. Binds the origin of replication (ori). This is Replication origin-binding protein (U73) from Homo sapiens (Human).